The following is a 240-amino-acid chain: Bidirectional sugar transporter SWEET5 (240 aa).

The Extracellular portion of the chain corresponds to 1 to 9 (MTDPHTART). A helical transmembrane segment spans residues 10-30 (IVGIVGNVISFGLFCAPIPTM). Positions 10–95 (IVGIVGNVIS…YVTIFFVFAT (86 aa)) constitute a MtN3/slv 1 domain. Residues 31–45 (VKIWKMKSVSEFKPD) are Cytoplasmic-facing. A helical transmembrane segment spans residues 46-66 (PYVATVLNCMMWTFYGLPFVQ). At 67-72 (PDSLLV) the chain is on the extracellular side. A helical transmembrane segment spans residues 73–93 (ITINGTGLFMELVYVTIFFVF). Topologically, residues 94 to 103 (ATSPVRRKIT) are cytoplasmic. The chain crosses the membrane as a helical span at residues 104–124 (IAMVIEVIFMAVVIFCTMYFL). Over 125-131 (HTTKQRS) the chain is Extracellular. The helical transmembrane segment at 132 to 152 (MLIGILCIVFNVIMYAAPLTV) threads the bilayer. Residues 133–217 (LIGILCIVFN…IIYITYYKTT (85 aa)) form the MtN3/slv 2 domain. Residues 153–165 (MKLVIKTKSVKYM) lie on the Cytoplasmic side of the membrane. A helical membrane pass occupies residues 166–186 (PFFLSLANFMNGVVWVIYACL). The Extracellular segment spans residues 187–190 (KFDP). Residues 191–211 (YILIPNGLGSLSGIIQLIIYI) traverse the membrane as a helical segment. Residues 212-240 (TYYKTTNWNDDDEDKEKRYSNAGIELGQA) lie on the Cytoplasmic side of the membrane.

It belongs to the SWEET sugar transporter family. In terms of assembly, forms homooligomers and heterooligomers with SWEET6, SWEET8, SWEET9, SWEET11 and SWEET12.

It localises to the cell membrane. Its function is as follows. Mediates both low-affinity uptake and efflux of sugar across the plasma membrane. May play roles in nurturing the male gametophyte. The polypeptide is Bidirectional sugar transporter SWEET5 (Arabidopsis thaliana (Mouse-ear cress)).